The chain runs to 142 residues: Putative pre-16S rRNA nuclease (142 aa).

Belongs to the YqgF nuclease family.

It localises to the cytoplasm. Functionally, could be a nuclease involved in processing of the 5'-end of pre-16S rRNA. The polypeptide is Putative pre-16S rRNA nuclease (Malacoplasma penetrans (strain HF-2) (Mycoplasma penetrans)).